A 1116-amino-acid polypeptide reads, in one-letter code: uncharacterized protein (1116 aa).

EF-hand domains lie at 8–43 (EEQT…SGLA), 42–77 (LAPQ…VALA), 166–201 (LSTE…INLL), and 292–327 (LPED…IKLK). EH domains lie at 9–106 (EQTA…DSSK), 134–224 (EMTR…AAST), and 259–348 (DLTS…VAPL). 5 residues coordinate Ca(2+): D305, N307, N309, K311, and E316. 7 disordered regions span residues 360-454 (PSVV…NSPT), 703-774 (SVNL…ASTV), 812-890 (TSLS…NTSA), 909-978 (PFAT…SPQI), 1004-1024 (TTTH…ENQY), 1044-1066 (SNEV…DDEL), and 1095-1116 (QAAE…AGHH). Residues 371 to 381 (NPNPTLAPNPT) show a composition bias toward pro residues. Residues 401 to 416 (FSPTLAPQHTSSNATK) show a composition bias toward polar residues. Residues 565–707 (KAQTEQVNRE…EDGLKSVNLT (143 aa)) adopt a coiled-coil conformation. Residues 723 to 749 (SFTSNGITTDKPTLPDTTSSVPTQHNS) are compositionally biased toward polar residues. Composition is skewed to low complexity over residues 755 to 774 (NTLR…ASTV) and 812 to 827 (TSLS…SLDS). Positions 864-890 (SKLTGSARNTAEPVENTSAEPIENTSA) are enriched in polar residues. Residues 957 to 969 (EIDDDESSSDEEP) are compositionally biased toward acidic residues. Composition is skewed to acidic residues over residues 1055–1066 (TANESDNDDDEL) and 1104–1116 (NSST…AGHH).

The protein localises to the cytoplasm. It is found in the cytoskeleton. This is an uncharacterized protein from Schizosaccharomyces pombe (strain 972 / ATCC 24843) (Fission yeast).